The chain runs to 79 residues: Large ribosomal subunit protein bL31 (79 aa).

Residues C16, C18, C37, and C40 each coordinate Zn(2+).

This sequence belongs to the bacterial ribosomal protein bL31 family. Type A subfamily. As to quaternary structure, part of the 50S ribosomal subunit. Zn(2+) serves as cofactor.

Binds the 23S rRNA. This is Large ribosomal subunit protein bL31 from Coxiella burnetii (strain CbuG_Q212) (Coxiella burnetii (strain Q212)).